We begin with the raw amino-acid sequence, 438 residues long: Aspartate--tRNA(Asp) ligase (438 aa).

Glu-170 is an L-aspartate binding site. Residues 192–195 (QLYK) are aspartate. Residue Arg-214 participates in L-aspartate binding. ATP-binding positions include 214–216 (RAE), 222–224 (RHL), and Glu-361. Residues Glu-361 and Ser-364 each contribute to the Mg(2+) site. L-aspartate is bound by residues Ser-364 and Arg-368. 409–412 (GAER) contacts ATP.

The protein belongs to the class-II aminoacyl-tRNA synthetase family. Type 2 subfamily. As to quaternary structure, homodimer. Requires Mg(2+) as cofactor.

It is found in the cytoplasm. The enzyme catalyses tRNA(Asp) + L-aspartate + ATP = L-aspartyl-tRNA(Asp) + AMP + diphosphate. Catalyzes the attachment of L-aspartate to tRNA(Asp) in a two-step reaction: L-aspartate is first activated by ATP to form Asp-AMP and then transferred to the acceptor end of tRNA(Asp). In Pyrococcus abyssi (strain GE5 / Orsay), this protein is Aspartate--tRNA(Asp) ligase.